The sequence spans 538 residues: Frizzled-4 (538 aa).

A signal peptide spans 1–37 (MAWQGTGPSVRGMPGGVRLRLGLLLLQLLLLQRPALG). Residues 38-213 (FGDEEERRCD…KCGYDAGLYS (176 aa)) are Extracellular-facing. In terms of domain architecture, FZ spans 41 to 162 (EEERRCDPIR…NDHNHMCMEG (122 aa)). 8 disulfides stabilise this stretch: cysteine 46–cysteine 107, cysteine 54–cysteine 100, cysteine 91–cysteine 129, cysteine 118–cysteine 159, cysteine 122–cysteine 146, cysteine 182–cysteine 201, cysteine 205–cysteine 283, and cysteine 303–cysteine 378. The N-linked (GlcNAc...) asparagine glycan is linked to asparagine 60. N-linked (GlcNAc...) asparagine glycosylation occurs at asparagine 145. The chain crosses the membrane as a helical span at residues 214 to 244 (RSAKEFTDIWMAVWASLCFISTTFTVLTFLI). The Cytoplasmic segment spans residues 245–250 (DSSRFS). Residues 251-276 (YPERPIIFLSMCYNIYSIAYIVRLTV) traverse the membrane as a helical segment. Residues 277 to 300 (GRERISCDFEEAAEPVLIQEGLKN) are Extracellular-facing. The chain crosses the membrane as a helical span at residues 301–334 (TGCAIIFLLMYFFGMASSIWWVILTLTWFLAAGL). Over 335 to 337 (KWG) the chain is Cytoplasmic. The chain crosses the membrane as a helical span at residues 338–366 (HEAIEMHSSYFHIAAWAIPAVKTIVILIM). Topologically, residues 367–384 (RLVDADELTGLCYVGNQS) are extracellular. A glycan (N-linked (GlcNAc...) asparagine) is linked at asparagine 382. The helical transmembrane segment at 385–419 (LDALTGFVVAPLFTYLVIGTLFIAAGLVALFKIRS) threads the bilayer. At 420 to 432 (NLQKDGTKTDKLE) the chain is on the cytoplasmic side. The chain crosses the membrane as a helical span at residues 433–461 (RLMVKIGVFSVLYTVPATCVIACYFYEIS). At 462–474 (NWALFRYSADDSN) the chain is on the extracellular side. The chain crosses the membrane as a helical span at residues 475-496 (MAVEMLKIFMSLLVGITSGMWI). At 497–538 (WSAKTLHTWQKCSNRLVNSGKVKREKRGNGWVKPGKGNETVV) the chain is on the cytoplasmic side. The Lys-Thr-X-X-X-Trp motif, mediates interaction with the PDZ domain of Dvl family members signature appears at 500-505 (KTLHTW). A PDZ-binding motif is present at residues 536 to 538 (TVV).

It belongs to the G-protein coupled receptor Fz/Smo family. In terms of assembly, interacts with MAGI3 and NDP. Component of a complex, at least composed of TSPAN12, FZD4 and norrin (NDP). Interacts (via FZ domain) with TSKU; TSKU competes with WNT2B for binding to FZD4, inhibiting Wnt signaling and repressing peripheral eye development. Interacts with glypican GPC3. In terms of processing, ubiquitinated by ZNRF3, leading to its degradation by the proteasome.

Its subcellular location is the cell membrane. Its function is as follows. Receptor for Wnt proteins. Most of frizzled receptors are coupled to the beta-catenin (CTNNB1) canonical signaling pathway, which leads to the activation of disheveled proteins, inhibition of GSK-3 kinase, nuclear accumulation of beta-catenin (CTNNB1) and activation of Wnt target genes. Plays a critical role in retinal vascularization by acting as a receptor for Wnt proteins and norrin (NDP). In retina, it can be both activated by Wnt protein-binding, but also by a Wnt-independent signaling via binding of norrin (NDP), promoting in both cases beta-catenin (CTNNB1) accumulation and stimulation of LEF/TCF-mediated transcriptional programs. A second signaling pathway involving PKC and calcium fluxes has been seen for some family members, but it is not yet clear if it represents a distinct pathway or if it can be integrated in the canonical pathway, as PKC seems to be required for Wnt-mediated inactivation of GSK-3 kinase. Both pathways seem to involve interactions with G-proteins. May be involved in transduction and intercellular transmission of polarity information during tissue morphogenesis and/or in differentiated tissues. The protein is Frizzled-4 (Fzd4) of Rattus norvegicus (Rat).